The sequence spans 601 residues: MVMLRTSFPSGSRTKAVRYHTLLRPILQQRFLRACFALLCLCCITSYWFSSGPFISLSFWFLSLVRGFVCFFFMFPYFVMLKSRMSTQKVTKQSLGAQLFYDFSPKSFFLVYLTFAVSVSCLCLFYIKGHASSIRLQWIASPNAYELPSLNERFVYMTYFSHILILALTVEHLYLQRDSPSRPVINVSFFNYIFQNLGWLIRFSFRKSIICCLFTPFSYAILRSYIWRFAALLTSCCRRIAYTKTPPKWPLSLRLLLHSFWMAFIVCLTFQIALLIFRVFLYSGPMIRGKLLSARSNDPNGTLVDGMKTKKKPLTECIATEELWFIAKRDPQRIKSIFQDIDRSVSIWQELYSITESRCKELATSLKILQSTGDFSAATSKKSGLTKKTNIPYSPNSNHEEINSIPLRNKNIFVPPSQGHSPLLEKIKKQGSLPSTTPVNEGGISDIIPKSLYDQVIRFISTFYKAPVFGIFRKTLRRQNEALLPNPWLFCVTVNSLTQLVLKSLKYDTYGVVARDISSILAVYCDTFDVLVSYKRSLVKNHSNSTNLDDDFKNLNSAANALHCGIIDITEKFQDFFTQLNLSPRIERRCWVLFREYKSNS.

Residues methionine 1–alanine 34 are Cytoplasmic-facing. A helical membrane pass occupies residues cysteine 35–isoleucine 55. Residues serine 56–serine 58 lie on the Perinuclear space side of the membrane. The chain crosses the membrane as a helical span at residues phenylalanine 59–valine 79. The Cytoplasmic portion of the chain corresponds to methionine 80–lysine 106. Residues serine 107–isoleucine 127 traverse the membrane as a helical segment. Over lysine 128 to arginine 153 the chain is Perinuclear space. Residues phenylalanine 154–tyrosine 174 form a helical membrane-spanning segment. The Cytoplasmic segment spans residues leucine 175–arginine 182. A helical membrane pass occupies residues proline 183–phenylalanine 203. Residues serine 204–leucine 256 lie on the Perinuclear space side of the membrane. Residues leucine 257–phenylalanine 277 form a helical membrane-spanning segment. Residues arginine 278–serine 601 lie on the Cytoplasmic side of the membrane.

This sequence belongs to the NDC1 family. In terms of assembly, component of the nuclear pore complex (NPC). NPC constitutes the exclusive means of nucleocytoplasmic transport. NPCs allow the passive diffusion of ions and small molecules and the active, nuclear transport receptor-mediated bidirectional transport of macromolecules such as proteins, RNAs, ribonucleoparticles (RNPs), and ribosomal subunits across the nuclear envelope. Due to its 8-fold rotational symmetry, all subunits are present with 8 copies or multiples thereof.

Its subcellular location is the nucleus. The protein resides in the nuclear pore complex. The protein localises to the nucleus membrane. It localises to the cytoplasm. It is found in the cytoskeleton. Its subcellular location is the microtubule organizing center. The protein resides in the spindle pole body. Component of the nuclear pore complex (NPC) and the spindle pole body (SPB), which plays a key role in de novo assembly and insertion of both structures in the nuclear envelope. Involved in the formation of the bipolar mitotic spindle. Anchors the spindle pole body in the nuclear envelope. In Schizosaccharomyces pombe (strain 972 / ATCC 24843) (Fission yeast), this protein is Nuclear envelope protein ndc1 (cut11).